The primary structure comprises 70 residues: Small ribosomal subunit protein bS21 (70 aa).

It belongs to the bacterial ribosomal protein bS21 family.

This is Small ribosomal subunit protein bS21 from Nautilia profundicola (strain ATCC BAA-1463 / DSM 18972 / AmH).